Reading from the N-terminus, the 210-residue chain is Large ribosomal subunit protein uL22 (210 aa).

The interval 123-210 (NEMTSKETVK…TKSTKKEGSK (88 aa)) is disordered. Positions 126 to 157 (TSKETVKEPAKKPSAKVEKPAEAKAPKQETST) are enriched in basic and acidic residues. Low complexity predominate over residues 158-185 (KKPTTTTESKPKTSKAPAQKQAAKVAKP).

Belongs to the universal ribosomal protein uL22 family. In terms of assembly, part of the 50S ribosomal subunit.

This protein binds specifically to 23S rRNA; its binding is stimulated by other ribosomal proteins, e.g. L4, L17, and L20. It is important during the early stages of 50S assembly. It makes multiple contacts with different domains of the 23S rRNA in the assembled 50S subunit and ribosome. In terms of biological role, the globular domain of the protein is located near the polypeptide exit tunnel on the outside of the subunit, while an extended beta-hairpin is found that lines the wall of the exit tunnel in the center of the 70S ribosome. The protein is Large ribosomal subunit protein uL22 of Metamycoplasma arthritidis (strain 158L3-1) (Mycoplasma arthritidis).